The primary structure comprises 561 residues: MSQEFDYIIIGAGSAGNVLATRLTEDADVSVLLLEAGGPDYRFDFRTQMPAALAFPLQGRRYNWAYETDPEPYMNNRRMECGRGKGLGGSSLINGMCYIRGNALDFDGWAKEPGLEDWSYLDCLPYFRKAETRDIGPNDYHGGDGPVSVTTPKAGNNPLFHAMVEAGVQAGYPRTDDLNGYQQEGFGPMDRTVTPEGRRAATGRGYLDQARGRPNLTIVTHALSDRILFSGKRAIGVSYLVGNGDNPATAHARREVLVCSGAIASPQLLQRSGVGPAALLRDLDIPAVHDLPGVGANLQDHLELYLQYACKQPVSIYPATKWWNQPAIGAQWLFLGKGLGASNQFEAGGFIRTREAFEWPNIQFHFLPVAINYNGSKGVQEHGFQAHMGSMRSPSRGRIHLKSRDPRQHPSILFNYMSHEQDWQEFRDGIRLTREIMNQPALDPYRGRELSPGVNVQSDAELDEFIRNHAETAFHPSCSCKMGSDDMAVVDGQGRVHGMEGLRVVDASIMPLIITGNLNATTIMMAEKIADRIRGRQPLPRSTAKYYVAGDAPVRGNPVRA.

6 to 35 (DYIIIGAGSAGNVLATRLTEDADVSVLLLE) contacts FAD. The active-site Proton acceptor is His475.

The protein belongs to the GMC oxidoreductase family. Requires FAD as cofactor.

The catalysed reaction is choline + A = betaine aldehyde + AH2. It catalyses the reaction betaine aldehyde + NAD(+) + H2O = glycine betaine + NADH + 2 H(+). The protein operates within amine and polyamine biosynthesis; betaine biosynthesis via choline pathway; betaine aldehyde from choline (cytochrome c reductase route): step 1/1. In terms of biological role, involved in the biosynthesis of the osmoprotectant glycine betaine. Catalyzes the oxidation of choline to betaine aldehyde and betaine aldehyde to glycine betaine at the same rate. The protein is Oxygen-dependent choline dehydrogenase of Pseudomonas aeruginosa (strain UCBPP-PA14).